The following is a 175-amino-acid chain: Alkyl hydroperoxide reductase AhpD (175 aa).

The active-site Proton donor is Cys-131. An intrachain disulfide couples Cys-131 to Cys-134. The active-site Cysteine sulfenic acid (-SOH) intermediate is Cys-134.

It belongs to the AhpD family.

It catalyses the reaction N(6)-[(R)-dihydrolipoyl]-L-lysyl-[lipoyl-carrier protein] + a hydroperoxide = N(6)-[(R)-lipoyl]-L-lysyl-[lipoyl-carrier protein] + an alcohol + H2O. Its function is as follows. Antioxidant protein with alkyl hydroperoxidase activity. Required for the reduction of the AhpC active site cysteine residues and for the regeneration of the AhpC enzyme activity. This is Alkyl hydroperoxide reductase AhpD from Brucella abortus (strain 2308).